The following is a 561-amino-acid chain: Carboxylesterase patB (561 aa).

A signal peptide spans methionine 1 to alanine 19. 3 N-linked (GlcNAc...) asparagine glycosylation sites follow: asparagine 38, asparagine 69, and asparagine 109. The Acyl-ester intermediate role is filled by serine 263. Serine 263 is a binding site for substrate. Asparagine 316 carries N-linked (GlcNAc...) asparagine glycosylation. Catalysis depends on glutamate 385, which acts as the Charge relay system. Residues asparagine 393, asparagine 412, asparagine 429, and asparagine 496 are each glycosylated (N-linked (GlcNAc...) asparagine).

It belongs to the type-B carboxylesterase/lipase family.

The protein resides in the cytoplasm. It localises to the cytosol. It carries out the reaction a carboxylic ester + H2O = an alcohol + a carboxylate + H(+). Its pathway is mycotoxin biosynthesis; patulin biosynthesis. In terms of biological role, carboxylesterase; part of the gene cluster that mediates the biosynthesis of patulin, an acetate-derived tetraketide mycotoxin produced by several fungal species that shows antimicrobial properties against several bacteria. The function of patB in patulin synthesis has still to be characterized. The pathway begins with the synthesis of 6-methylsalicylic acid by the polyketide synthase (PKS) patK via condensation of acetate and malonate units. The 6-methylsalicylic acid decarboxylase patG then catalyzes the decarboxylation of 6-methylsalicylic acid to yield m-cresol (also known as 3-methylphenol). These first reactions occur in the cytosol. The intermediate m-cresol is then transported into the endoplasmic reticulum where the cytochrome P450 monooxygenase patH converts it to m-hydroxybenzyl alcohol, which is further converted to gentisyl alcohol by the cytochrome P450 monooxygenase patI. The oxidoreductases patJ and patO further convert gentisyl alcohol to isoepoxydon in the vacuole. PatN catalyzes then the transformation of isoepoxydon into phyllostine. The cluster protein patF is responsible for the conversion from phyllostine to neopatulin whereas the alcohol dehydrogenase patD converts neopatulin to E-ascladiol. The steps between isoepoxydon and E-ascladiol occur in the cytosol, and E-ascladiol is probably secreted to the extracellular space by one of the cluster-specific transporters patC or patM. Finally, the secreted patulin synthase patE catalyzes the conversion of E-ascladiol to patulin. The sequence is that of Carboxylesterase patB from Penicillium expansum (Blue mold rot fungus).